The sequence spans 368 residues: Trans-enoyl reductase thnE (368 aa).

53–56 (VDVK) lines the NADP(+) pocket. 140–147 (LATATAAY) contacts substrate. Residues 179 to 182 (STAT), 202 to 205 (SPSN), Tyr220, and 267 to 268 (VE) contribute to the NADP(+) site. 289–293 (VMTVW) contacts substrate. Position 358 to 359 (358 to 359 (PS)) interacts with NADP(+).

It belongs to the zinc-containing alcohol dehydrogenase family. In terms of assembly, monomer.

The enzyme catalyses malate + 6 malonyl-CoA + acetyl-CoA + 2 AH2 + 2 S-adenosyl-L-methionine + 5 NADPH + 9 H(+) = trihazone A + 2 A + 2 S-adenosyl-L-homocysteine + 6 CO2 + 5 NADP(+) + 7 CoA + 6 H2O. It functions in the pathway secondary metabolite biosynthesis. Functionally, trans-enoyl reductase; part of the gene cluster that produces the tetronate natural products trihazones. The PKS-NRPS synthetase thnA with the help of the trans-enoyl reductase thnE are responsible for the synthesis of the carboxylmethyl containing trihazone A. The PKS portion of thnA synthesizes beta-keto-triene chain from one acetyl-CoA and 6 equivalents of malonyl-CoA, in collaboration with thnE, which selectively reduces the enoyl intermediate during the first and fourth iteration of the PKS. The NRPS domain selects and activates malate, of which the alpha-hydroxyl group attacks the completed polyketide acyl-S-ACP chain to form the ester product. Intramolecular Dieckmann cyclization catalyzed by the terminal reductase domain releases the product as trihazone A from the PKS-NPRS. The pathway begins with the formation of trihazone A by the hybrid PKS-NRPS synthetase thnA and the trans-enoyl reductase thnE. Trihazone A is further decarboxylated by the 2-oxoglutarate-dependent dioxygenase thnC to produce trihazone D. The function of the FAD-dependent monooxygenase thnD has still to be identified. In Trichoderma harzianum (Hypocrea lixii), this protein is Trans-enoyl reductase thnE.